The following is a 213-amino-acid chain: MIAGVVVARNAREAVAKIREGNADLYEVRLDRFESFELAPLKPFADRLIITIRRAEEGGFRRIPEEERLELYRRAMTLKPRYVDVEARSEIAGEVMREARKRRVGVILSHHDFEGTPPFETLMEILQGMASMAPDVVKIVPTANSHLDNVRVLRLYEHAENLVAFCMGPLGRISRLFSALLAPFTYASLEKAVAPGQMSVEELRQLLVMLDGR.

3-dehydroquinate is bound by residues 27–29 and Arg53; that span reads EVR. Residue His111 is the Proton donor/acceptor of the active site. The Schiff-base intermediate with substrate role is filled by Lys138. Positions 175 and 197 each coordinate 3-dehydroquinate.

Belongs to the type-I 3-dehydroquinase family. As to quaternary structure, homodimer.

It catalyses the reaction 3-dehydroquinate = 3-dehydroshikimate + H2O. Its pathway is metabolic intermediate biosynthesis; chorismate biosynthesis; chorismate from D-erythrose 4-phosphate and phosphoenolpyruvate: step 3/7. Functionally, involved in the third step of the chorismate pathway, which leads to the biosynthesis of aromatic amino acids. Catalyzes the cis-dehydration of 3-dehydroquinate (DHQ) and introduces the first double bond of the aromatic ring to yield 3-dehydroshikimate. In Thermococcus gammatolerans (strain DSM 15229 / JCM 11827 / EJ3), this protein is 3-dehydroquinate dehydratase.